The following is a 449-amino-acid chain: Bifunctional protein GlmU (449 aa).

Residues 1–225 (MLSVAILAAG…NGELQGINNR (225 aa)) form a pyrophosphorylase region. Residues 7–10 (LAAG), Lys-21, Gln-73, and 78–79 (GT) contribute to the UDP-N-acetyl-alpha-D-glucosamine site. Asp-103 provides a ligand contact to Mg(2+). 4 residues coordinate UDP-N-acetyl-alpha-D-glucosamine: Gly-140, Glu-154, Asn-169, and Asn-223. Asn-223 is a Mg(2+) binding site. The interval 226–246 (IQLSKCEEIIQNSIKEKHMLN) is linker. The interval 247–449 (GVTFINQASC…NIDNWERKKP (203 aa)) is N-acetyltransferase. UDP-N-acetyl-alpha-D-glucosamine-binding residues include Arg-328 and Lys-346. The active-site Proton acceptor is His-358. 2 residues coordinate UDP-N-acetyl-alpha-D-glucosamine: Tyr-361 and Asn-372. Ala-375, Ala-418, and Arg-435 together coordinate acetyl-CoA.

In the N-terminal section; belongs to the N-acetylglucosamine-1-phosphate uridyltransferase family. This sequence in the C-terminal section; belongs to the transferase hexapeptide repeat family. As to quaternary structure, homotrimer. The cofactor is Mg(2+).

The protein resides in the cytoplasm. It carries out the reaction alpha-D-glucosamine 1-phosphate + acetyl-CoA = N-acetyl-alpha-D-glucosamine 1-phosphate + CoA + H(+). It catalyses the reaction N-acetyl-alpha-D-glucosamine 1-phosphate + UTP + H(+) = UDP-N-acetyl-alpha-D-glucosamine + diphosphate. It functions in the pathway nucleotide-sugar biosynthesis; UDP-N-acetyl-alpha-D-glucosamine biosynthesis; N-acetyl-alpha-D-glucosamine 1-phosphate from alpha-D-glucosamine 6-phosphate (route II): step 2/2. It participates in nucleotide-sugar biosynthesis; UDP-N-acetyl-alpha-D-glucosamine biosynthesis; UDP-N-acetyl-alpha-D-glucosamine from N-acetyl-alpha-D-glucosamine 1-phosphate: step 1/1. The protein operates within bacterial outer membrane biogenesis; LPS lipid A biosynthesis. Its function is as follows. Catalyzes the last two sequential reactions in the de novo biosynthetic pathway for UDP-N-acetylglucosamine (UDP-GlcNAc). The C-terminal domain catalyzes the transfer of acetyl group from acetyl coenzyme A to glucosamine-1-phosphate (GlcN-1-P) to produce N-acetylglucosamine-1-phosphate (GlcNAc-1-P), which is converted into UDP-GlcNAc by the transfer of uridine 5-monophosphate (from uridine 5-triphosphate), a reaction catalyzed by the N-terminal domain. The polypeptide is Bifunctional protein GlmU (Prochlorococcus marinus (strain MIT 9312)).